The chain runs to 155 residues: 3-dehydroquinate dehydratase (155 aa).

Tyr31 functions as the Proton acceptor in the catalytic mechanism. Substrate is bound by residues Asn83, His89, and Asp96. Catalysis depends on His109, which acts as the Proton donor. Substrate-binding positions include 110–111 (LS) and Arg120.

It belongs to the type-II 3-dehydroquinase family. In terms of assembly, homododecamer.

The catalysed reaction is 3-dehydroquinate = 3-dehydroshikimate + H2O. It functions in the pathway metabolic intermediate biosynthesis; chorismate biosynthesis; chorismate from D-erythrose 4-phosphate and phosphoenolpyruvate: step 3/7. Functionally, catalyzes a trans-dehydration via an enolate intermediate. The sequence is that of 3-dehydroquinate dehydratase from Laribacter hongkongensis (strain HLHK9).